The following is a 104-amino-acid chain: Large ribosomal subunit protein bL21 (104 aa).

This sequence belongs to the bacterial ribosomal protein bL21 family. Part of the 50S ribosomal subunit. Contacts protein L20.

In terms of biological role, this protein binds to 23S rRNA in the presence of protein L20. This chain is Large ribosomal subunit protein bL21, found in Francisella tularensis subsp. holarctica (strain FTNF002-00 / FTA).